Here is a 548-residue protein sequence, read N- to C-terminus: Probable malate:quinone oxidoreductase (548 aa).

Residues 521 to 548 (DKPQAADSTPKPQLKPQPVQKEVADIAL) form a disordered region. Residues 530–541 (PKPQLKPQPVQK) are compositionally biased toward low complexity.

The protein belongs to the MQO family. The cofactor is FAD.

The catalysed reaction is (S)-malate + a quinone = a quinol + oxaloacetate. It participates in carbohydrate metabolism; tricarboxylic acid cycle; oxaloacetate from (S)-malate (quinone route): step 1/1. This Escherichia coli O139:H28 (strain E24377A / ETEC) protein is Probable malate:quinone oxidoreductase.